The chain runs to 172 residues: Protein-export protein SecB (172 aa).

A disordered region spans residues 153–172 (AQGQGGDSGIVMPDGSQARH).

This sequence belongs to the SecB family. As to quaternary structure, homotetramer, a dimer of dimers. One homotetramer interacts with 1 SecA dimer.

Its subcellular location is the cytoplasm. In terms of biological role, one of the proteins required for the normal export of preproteins out of the cell cytoplasm. It is a molecular chaperone that binds to a subset of precursor proteins, maintaining them in a translocation-competent state. It also specifically binds to its receptor SecA. This Cupriavidus metallidurans (strain ATCC 43123 / DSM 2839 / NBRC 102507 / CH34) (Ralstonia metallidurans) protein is Protein-export protein SecB.